A 275-amino-acid polypeptide reads, in one-letter code: uncharacterized protein (275 aa).

Asp45 lines the NADPH pocket. Residues Tyr50 and His111 each act as proton donor in the active site. NADPH-binding residues include Ser139, Gln162, Leu191, Lys196, Ser232, Ser233, and Arg237.

Belongs to the aldo/keto reductase family.

It is found in the cytoplasm. It localises to the nucleus. This is an uncharacterized protein from Schizosaccharomyces pombe (strain 972 / ATCC 24843) (Fission yeast).